We begin with the raw amino-acid sequence, 458 residues long: MTLPSIAIIGRPNVGKSTLVNRLCQSNDAIVFDKPGVTRDRTYQNASWGGKEFQVVDTGGLVFEDDSEFLPEIRTQVFLALEEASIALFVVDGNQGVTTGDLSIAKWLRNSDCKTIVAVNKCESLSLGISMASEFWKLGLGEPYPVSAIHGSGTGDLLDLVIDELPKDFDVEDKEDKVMMSIIGRPNVGKSSLLNAICGEKRAIVSDISGTTTDSIDTLIKKNSHLWKIVDTAGIRRKKNVKYGTEFFGINRAFKSIDRSDVCVLVIDAIDGVTDQDQKLAGRIEEQGRACVIVVNKWDLVEKNNSTIYQVEKELRSKLYFLHWSKMIFISALTGQRVENIFEHALNAVTQHRMRVTTSVVNEVLKEALGWKSPPTKRSGKQGRLYYGTQVKNQPPTFTLFVNDPKLFGITYRRYIEKQIRLNLGFEGSPIILLWRGKQKRDLEKETSKKNINIIQKD.

2 consecutive EngA-type G domains span residues 4-169 (PSIA…PKDF) and 178-353 (VMMS…TQHR). GTP-binding positions include 10 to 17 (GRPNVGKS), 57 to 61 (DTGGL), 120 to 123 (NKCE), 184 to 191 (GRPNVGKS), 231 to 235 (DTAGI), and 296 to 299 (NKWD). The 86-residue stretch at 354 to 439 (MRVTTSVVNE…PIILLWRGKQ (86 aa)) folds into the KH-like domain.

This sequence belongs to the TRAFAC class TrmE-Era-EngA-EngB-Septin-like GTPase superfamily. EngA (Der) GTPase family. In terms of assembly, associates with the 50S ribosomal subunit.

Its function is as follows. GTPase that plays an essential role in the late steps of ribosome biogenesis. This Prochlorococcus marinus (strain MIT 9515) protein is GTPase Der.